A 436-amino-acid chain; its full sequence is MSKPLPLVTRQGDRIVIVNGLRTPFAKQATAYHGVPAVDLGKIVVSELLARSGISSELIDQLVFGQVVQMPEAPNIAREIVLGTGMSVHTDAYSVSRACATSFQAVANVAESIIAGSVDIAIAGGADSSSVLPIGVSKALARTLVDANKARSLSQKLKLFSRLRLRDLLPVAPAVAEYSTGLRMGDTAEQMAKTYGISREDQDALALRSHQLAAEAWQQGWLHDEVMTAYIPPYREAIIEDNNIRKDSILAQYAKLRPAFDRQHGSVTAANSTPLTDGAAAVLMMSESKAKALGLPPLGYLRSFAFSAIDVWQDMLLGPSYATPLALDRAGITLADLTLIDMHEAFAAQTLANLKMFASDTFAREKLGRSQAIGEVDMSKFNVLGGSIAYGHPFAATGARMITQTLNELRRRGGGLGLTTACAAGGLGAAMILEVE.

Cysteine 99 (acyl-thioester intermediate) is an active-site residue. Active-site proton acceptor residues include histidine 392 and cysteine 422.

It belongs to the thiolase-like superfamily. Thiolase family. In terms of assembly, heterotetramer of two alpha chains (FadJ) and two beta chains (FadI).

The protein resides in the cytoplasm. It catalyses the reaction an acyl-CoA + acetyl-CoA = a 3-oxoacyl-CoA + CoA. The protein operates within lipid metabolism; fatty acid beta-oxidation. Functionally, catalyzes the final step of fatty acid oxidation in which acetyl-CoA is released and the CoA ester of a fatty acid two carbons shorter is formed. The sequence is that of 3-ketoacyl-CoA thiolase from Yersinia pestis bv. Antiqua (strain Angola).